A 207-amino-acid chain; its full sequence is Large ribosomal subunit protein uL4 (207 aa).

The disordered stretch occupies residues 59–78 (GSGKKPFKQKGTGQARQGCK).

This sequence belongs to the universal ribosomal protein uL4 family. As to quaternary structure, part of the 50S ribosomal subunit.

In terms of biological role, one of the primary rRNA binding proteins, this protein initially binds near the 5'-end of the 23S rRNA. It is important during the early stages of 50S assembly. It makes multiple contacts with different domains of the 23S rRNA in the assembled 50S subunit and ribosome. Its function is as follows. Forms part of the polypeptide exit tunnel. The protein is Large ribosomal subunit protein uL4 of Geotalea daltonii (strain DSM 22248 / JCM 15807 / FRC-32) (Geobacter daltonii).